The chain runs to 102 residues: MALNEQDVARIARLARIELTPDQRSRAQDELNGILHLIERLQAADTEGVEPLAHPLSAHQDIALRLRPDAVTETPSEDRRAELLANAPDARDGLFLVPKVIE.

The protein belongs to the GatC family. Heterotrimer of A, B and C subunits.

It catalyses the reaction L-glutamyl-tRNA(Gln) + L-glutamine + ATP + H2O = L-glutaminyl-tRNA(Gln) + L-glutamate + ADP + phosphate + H(+). The enzyme catalyses L-aspartyl-tRNA(Asn) + L-glutamine + ATP + H2O = L-asparaginyl-tRNA(Asn) + L-glutamate + ADP + phosphate + 2 H(+). Functionally, allows the formation of correctly charged Asn-tRNA(Asn) or Gln-tRNA(Gln) through the transamidation of misacylated Asp-tRNA(Asn) or Glu-tRNA(Gln) in organisms which lack either or both of asparaginyl-tRNA or glutaminyl-tRNA synthetases. The reaction takes place in the presence of glutamine and ATP through an activated phospho-Asp-tRNA(Asn) or phospho-Glu-tRNA(Gln). The chain is Aspartyl/glutamyl-tRNA(Asn/Gln) amidotransferase subunit C from Bordetella petrii (strain ATCC BAA-461 / DSM 12804 / CCUG 43448).